The chain runs to 910 residues: Valine--tRNA ligase (910 aa).

The 'HIGH' region motif lies at 46–56 (PNVTGSLHMGH). A 'KMSKS' region motif is present at residues 539–543 (KMSKS). Lysine 542 contributes to the ATP binding site. Residues 845–909 (DLDILRNKIQ…QMLQERLKML (65 aa)) are a coiled coil.

The protein belongs to the class-I aminoacyl-tRNA synthetase family. ValS type 1 subfamily. Monomer.

Its subcellular location is the cytoplasm. It carries out the reaction tRNA(Val) + L-valine + ATP = L-valyl-tRNA(Val) + AMP + diphosphate. Functionally, catalyzes the attachment of valine to tRNA(Val). As ValRS can inadvertently accommodate and process structurally similar amino acids such as threonine, to avoid such errors, it has a 'posttransfer' editing activity that hydrolyzes mischarged Thr-tRNA(Val) in a tRNA-dependent manner. The chain is Valine--tRNA ligase from Synechocystis sp. (strain ATCC 27184 / PCC 6803 / Kazusa).